The chain runs to 198 residues: DnaJ homolog subfamily C member 12 (198 aa).

Met-1 is subject to N-acetylmethionine. In terms of domain architecture, J spans 14-79; that stretch reads DYYTLLGCDE…ASRARYDHWR (66 aa). Residues 112–167 are disordered; it reads MLEESDQTPTDKIENEEQDEQKEIKKEEFGSTTEKMEQKESKSVEKSFSPQNPDSP. The segment covering 120 to 156 has biased composition (basic and acidic residues); that stretch reads PTDKIENEEQDEQKEIKKEEFGSTTEKMEQKESKSVE. Phosphoserine occurs at positions 160, 166, and 182.

Interacts with HSPA8. Interacts with TPH1. Interacts with TPH2.

The protein localises to the cytoplasm. In terms of biological role, probable co-chaperone that participates in the proper folding of biopterin-dependent aromatic amino acid hydroxylases, which include phenylalanine-4-hydroxylase (PAH), tyrosine 3-monooxygenase (TH) and peripheral and neuronal tryptophan hydroxylases (TPH1 and TPH2). The sequence is that of DnaJ homolog subfamily C member 12 (DNAJC12) from Bos taurus (Bovine).